The primary structure comprises 354 residues: Arginase-2, mitochondrial (354 aa).

The N-terminal 22 residues, M1–S22, are a transit peptide targeting the mitochondrion. 4 residues coordinate Mn(2+): H120, D143, H145, and D147. Residues H145–N149, S156–N158, and D202 contribute to the substrate site. D251 and D253 together coordinate Mn(2+). 2 residues coordinate substrate: T265 and E296. Positions I332–I354 are disordered.

Belongs to the arginase family. Homotrimer. Mn(2+) serves as cofactor.

The protein localises to the mitochondrion. The catalysed reaction is L-arginine + H2O = urea + L-ornithine. It functions in the pathway nitrogen metabolism; urea cycle; L-ornithine and urea from L-arginine: step 1/1. Functionally, may play a role in the regulation of extra-urea cycle arginine metabolism and also in down-regulation of nitric oxide synthesis. Extrahepatic arginase functions to regulate L-arginine bioavailability to nitric oxid synthase (NOS). Arginine metabolism is a critical regulator of innate and adaptive immune responses. Seems to be involved in negative regulation of the survival capacity of activated T cells. May suppress inflammation-related signaling in asthmatic airway epithelium. May play a role in promoting prenatal immune suppression. Regulates RPS6KB1 signaling, which promotes endothelial cell senescence and inflammation and implicates NOS3/eNOS dysfunction. Can inhibit endothelial autophagy independently of its enzymatic activity implicating mTORC2 signaling. Involved in vascular smooth muscle cell senescence and apoptosis independently of its enzymatic activity. This is Arginase-2, mitochondrial (ARG2) from Bos taurus (Bovine).